A 77-amino-acid chain; its full sequence is Conotoxin Bt6.6 (77 aa).

The N-terminal stretch at 1-19 is a signal peptide; that stretch reads MEKLTILLLVAAVLMSTQA. A propeptide spanning residues 20–38 is cleaved from the precursor; the sequence is LIQSDGEKRQQAKINFLSX. Intrachain disulfides connect Cys-51–Cys-65, Cys-58–Cys-69, and Cys-64–Cys-74.

It belongs to the conotoxin O2 superfamily. As to expression, expressed by the venom duct.

The protein localises to the secreted. This Conus betulinus (Beech cone) protein is Conotoxin Bt6.6.